Here is a 273-residue protein sequence, read N- to C-terminus: 4-hydroxy-tetrahydrodipicolinate reductase (273 aa).

Residues 11–16 and glutamate 36 each bind NAD(+); that span reads GAGGRM. NADP(+) is bound at residue arginine 37. Residues 100-102 and 124-127 each bind NAD(+); these read GTT and AANY. Histidine 157 (proton donor/acceptor) is an active-site residue. Histidine 158 contacts (S)-2,3,4,5-tetrahydrodipicolinate. Lysine 161 (proton donor) is an active-site residue. Residue 167-168 participates in (S)-2,3,4,5-tetrahydrodipicolinate binding; it reads GT.

This sequence belongs to the DapB family.

The protein resides in the cytoplasm. It carries out the reaction (S)-2,3,4,5-tetrahydrodipicolinate + NAD(+) + H2O = (2S,4S)-4-hydroxy-2,3,4,5-tetrahydrodipicolinate + NADH + H(+). The enzyme catalyses (S)-2,3,4,5-tetrahydrodipicolinate + NADP(+) + H2O = (2S,4S)-4-hydroxy-2,3,4,5-tetrahydrodipicolinate + NADPH + H(+). Its pathway is amino-acid biosynthesis; L-lysine biosynthesis via DAP pathway; (S)-tetrahydrodipicolinate from L-aspartate: step 4/4. Its function is as follows. Catalyzes the conversion of 4-hydroxy-tetrahydrodipicolinate (HTPA) to tetrahydrodipicolinate. In Acinetobacter baylyi (strain ATCC 33305 / BD413 / ADP1), this protein is 4-hydroxy-tetrahydrodipicolinate reductase.